The sequence spans 513 residues: Xylose import ATP-binding protein XylG (513 aa).

ABC transporter domains follow at residues 5 to 242 (LEMK…VGRE) and 259 to 505 (LRIE…LRSE). 37–44 (GENGSGKS) contacts ATP.

This sequence belongs to the ABC transporter superfamily. Xylose importer (TC 3.A.1.2.4) family. As to quaternary structure, the complex is composed of two ATP-binding proteins (XylG), two transmembrane proteins (XylH) and a solute-binding protein (XylF).

It localises to the cell inner membrane. The catalysed reaction is D-xylose(out) + ATP + H2O = D-xylose(in) + ADP + phosphate + H(+). Functionally, part of the ABC transporter complex XylFGH involved in xylose import. Responsible for energy coupling to the transport system. This is Xylose import ATP-binding protein XylG from Shigella flexneri serotype 5b (strain 8401).